The sequence spans 1158 residues: MPVRRGHVAPQNTFLDTIIRKFEGQSRKFIIANARVENCAVIYCNDGFCELCGYSRAEVMQRPCTCDFLHGPRTQRRAAAQIAQALLGAEERKVEIAFYRKDGSCFLCLVDVVPVKNEDGAVIMFILNFEVVMEKDMVGSPTHDTNHRGPPTSWLAPGRAKTFRLKLPALLALTTRESSARPGGVGSAGAPGAVVVDVDLSPAVPSRESLALDEVTAMDNHVAGLGPMEEQRALVGSSSPPAGAPEPLPSPRAHSLNPDASGSSCSLARTRSRESCASVRRASSADDIEAMRAGLPPPPRHASTGAMHPLRGGLLNSTSDSDLVRYRTISKIPQITLNFVDLKGDPFLASPTSDREIIAPKIKERTHNVTEKVTQVLSLGADVLPEYKLQAPRIHRWTILHYSPFKAVWDWLILLLVIYTAVFTPYSAAFLLKETEEGPPAPDCGYACQPLAVVDFIVDIMFIVDILINFRTTYVNANEEVVSHPGRIAVHYFKGWFLIDMVAAIPFDLLIFGSGSEELIGLLKTARLLRLVRVARKLDRYSEYGAAVLFLLMCTFALIAHWLACIWYAIGNMEQPHMDSRIGWLHNLGDQIGKPYNSSGLGGPSIKDKYVTALYFTFSSLTSVGFGNVSPNTNSEKIFSICVMLIGSLMYASIFGNVSAIIQRLYSGTARYHTQMLRVREFIRFHQIPNPLRQRLEEYFQHAWSYTNGIDMNAVLKGFPECLQADICLHLNRSLLQHCKPFRGATKGCLRALAMKFKTTHAPPGDTLVHAGDLLTALYFISRGSIEILRGDVVVAILGKNDIFGEPLNLYARPGKSNGDVRALTYCDLHKIHRDDLLEVLDMYPEFSDHFWSSLEITFNLRDTNMIPGSPGSAELEGGFNRQRKRKLSFRRRTDRDPEQPGEVSALGPGRAGAGPSGRGRPGGPWGESPSSGPSSPESSEDEGPGRSSSPLRLVPFSSPRPPGEPPGGEPLTEDGEKSSDTCNPLSGAFSGVSNIFSFWGDSRGHQYQELPRCPAPTPSLLNIPLSSPCRRPRGDVEGRLDALQRQLNRLETRLSADMATVLQLLQRQMTLIPPAYSAVTTPGPGPTSTSSLLPVSPIPTLTLDSLSQVSQFMAFEELPPGAPELPQDGPPRRLSLPGQLGALTSQPLHRHGSDPGS.

Over 1–402 the chain is Cytoplasmic; the sequence is MPVRRGHVAP…RIHRWTILHY (402 aa). Residues 17–88 enclose the PAS domain; that stretch reads TIIRKFEGQS…AAQIAQALLG (72 aa). The region spanning 92–144 is the PAC domain; sequence RKVEIAFYRKDGSCFLCLVDVVPVKNEDGAVIMFILNFEVVMEKDMVGSPTHD. The tract at residues 232 to 314 is disordered; sequence RALVGSSSPP…GAMHPLRGGL (83 aa). S239 is subject to Phosphoserine. Residues 258–269 are compositionally biased toward polar residues; the sequence is PDASGSSCSLAR. 4 positions are modified to phosphoserine: S283, S284, S319, and S350. A helical membrane pass occupies residues 403 to 423; that stretch reads SPFKAVWDWLILLLVIYTAVF. Residues 424–449 lie on the Extracellular side of the membrane; the sequence is TPYSAAFLLKETEEGPPAPDCGYACQ. Residues 450–470 form a helical membrane-spanning segment; that stretch reads PLAVVDFIVDIMFIVDILINF. Topologically, residues 471-494 are cytoplasmic; the sequence is RTTYVNANEEVVSHPGRIAVHYFK. A helical membrane pass occupies residues 495–515; it reads GWFLIDMVAAIPFDLLIFGSG. The Extracellular segment spans residues 516 to 519; the sequence is SEEL. The helical; Voltage-sensor transmembrane segment at 520–540 threads the bilayer; that stretch reads IGLLKTARLLRLVRVARKLDR. Residues 541–546 lie on the Cytoplasmic side of the membrane; that stretch reads YSEYGA. Residues 547–567 traverse the membrane as a helical segment; the sequence is AVLFLLMCTFALIAHWLACIW. Over 568-610 the chain is Extracellular; it reads YAIGNMEQPHMDSRIGWLHNLGDQIGKPYNSSGLGGPSIKDKY. N-linked (GlcNAc...) asparagine glycosylation is present at N597. The segment at residues 611 to 631 is an intramembrane region (pore-forming); that stretch reads VTALYFTFSSLTSVGFGNVSP. Positions 623-628 match the Selectivity filter motif; that stretch reads SVGFGN. Residues 632–637 lie on the Extracellular side of the membrane; it reads NTNSEK. Residues 638-658 traverse the membrane as a helical segment; sequence IFSICVMLIGSLMYASIFGNV. The Cytoplasmic segment spans residues 659–1158; sequence SAIIQRLYSG…LHRHGSDPGS (500 aa). The tract at residues 741–841 is cNMP-binding domain; that stretch reads PFRGATKGCL…IHRDDLLEVL (101 aa). The interval 869–987 is disordered; sequence GSPGSAELEG…KSSDTCNPLS (119 aa). A phosphoserine mark is found at S870 and S873. The span at 882–891 shows a compositional bias: basic residues; it reads RQRKRKLSFR. A compositionally biased stretch (gly residues) spans 910 to 926; the sequence is GRAGAGPSGRGRPGGPW. Positions 927–938 are enriched in low complexity; the sequence is GESPSSGPSSPE. Over residues 959-969 the composition is skewed to pro residues; the sequence is SPRPPGEPPGG. R1013 is modified (omega-N-methylarginine). Residues 1034–1061 are a coiled coil; that stretch reads RGDVEGRLDALQRQLNRLETRLSADMAT. The disordered stretch occupies residues 1116 to 1158; it reads FEELPPGAPELPQDGPPRRLSLPGQLGALTSQPLHRHGSDPGS. S1136 is subject to Phosphoserine.

The protein belongs to the potassium channel family. H (Eag) (TC 1.A.1.20) subfamily. Kv11.1/KCNH2 sub-subfamily. As to quaternary structure, the potassium channel is probably composed of a homo- or heterotetrameric complex of pore-forming alpha subunits that can associate with modulating beta subunits. Interacts with DNAJB12 and DNAJB14; chaperones DNAJB12 and DNAJB14 promote tetramerization. Heteromultimer with KCNH6/ERG2 and KCNH7/ERG3. Interacts with ALG10B. Forms a stable complex with KCNE1 or KCNE2, and that this heteromultimerization regulates Inward rectifier potassium channel activity. Interacts with CANX. The core-glycosylated, but not the fully glycosylated form interacts with RNF207. Interacts with NDFIP1 and NDFIP2; this interaction decreases the cell membrane expression by targeting KCNH2, through interaction with NEDD4L, for the degradation through the multivesicular bodies (MVBs)-lysosomal pathway. Phosphorylated on serine and threonine residues. Phosphorylation by PKA inhibits ion conduction. Highly expressed in left and right atria of the heart, in cortex and hippocampus; detected at intermediate levels in left and right ventricle, Purkinje fibers, cerebellum, thalamus and basal ganglia; detected at low levels in liver, spleen and kidney.

The protein resides in the cell membrane. The enzyme catalyses K(+)(in) = K(+)(out). Functionally, pore-forming (alpha) subunit of voltage-gated inwardly rectifying potassium channel. Characterized by unusual gating kinetics by producing relatively small outward currents during membrane depolarization and large inward currents during subsequent repolarization which reflect a rapid inactivation during depolarization and quick recovery from inactivation but slow deactivation (closing) during repolarization. Channel properties are modulated by cAMP and subunit assembly. Forms a stable complex with KCNE1 or KCNE2, and that this heteromultimerization regulates inward rectifier potassium channel activity. The sequence is that of Voltage-gated inwardly rectifying potassium channel KCNH2 from Canis lupus familiaris (Dog).